The primary structure comprises 167 residues: Endoribonuclease YbeY (167 aa).

Zn(2+) contacts are provided by histidine 132, histidine 136, and histidine 142.

This sequence belongs to the endoribonuclease YbeY family. Zn(2+) serves as cofactor.

Its subcellular location is the cytoplasm. Functionally, single strand-specific metallo-endoribonuclease involved in late-stage 70S ribosome quality control and in maturation of the 3' terminus of the 16S rRNA. The sequence is that of Endoribonuclease YbeY from Clostridium tetani (strain Massachusetts / E88).